The sequence spans 101 residues: Ascorbate-specific PTS system EIIB component (101 aa).

The region spanning 3–96 is the PTS EIIB type-2 domain; it reads VRILAVCGNG…KLLEVIKEHF (94 aa). Cys9 serves as the catalytic Phosphocysteine intermediate. Cys9 is modified (phosphocysteine).

Its subcellular location is the cytoplasm. The enzyme catalyses N(pros)-phospho-L-histidyl-[protein] + L-ascorbate(out) = L-ascorbate 6-phosphate(in) + L-histidyl-[protein]. Its function is as follows. The phosphoenolpyruvate-dependent sugar phosphotransferase system (sugar PTS), a major carbohydrate active transport system, catalyzes the phosphorylation of incoming sugar substrates concomitantly with their translocation across the cell membrane. The enzyme II UlaABC PTS system is involved in ascorbate transport. This Salmonella choleraesuis (strain SC-B67) protein is Ascorbate-specific PTS system EIIB component (ulaB).